We begin with the raw amino-acid sequence, 203 residues long: LexA repressor (203 aa).

A DNA-binding region (H-T-H motif) is located at residues 30–50; it reads VREICQAVSLKSTSTVHGHLK. Active-site for autocatalytic cleavage activity residues include S127 and K164.

The protein belongs to the peptidase S24 family. In terms of assembly, homodimer.

The enzyme catalyses Hydrolysis of Ala-|-Gly bond in repressor LexA.. Its function is as follows. Represses a number of genes involved in the response to DNA damage (SOS response), including recA and lexA. In the presence of single-stranded DNA, RecA interacts with LexA causing an autocatalytic cleavage which disrupts the DNA-binding part of LexA, leading to derepression of the SOS regulon and eventually DNA repair. In Clostridium perfringens (strain ATCC 13124 / DSM 756 / JCM 1290 / NCIMB 6125 / NCTC 8237 / Type A), this protein is LexA repressor.